A 227-amino-acid polypeptide reads, in one-letter code: DNA repair protein RecO (227 aa).

It belongs to the RecO family.

In terms of biological role, involved in DNA repair and RecF pathway recombination. The polypeptide is DNA repair protein RecO (Pseudomonas putida (strain ATCC 700007 / DSM 6899 / JCM 31910 / BCRC 17059 / LMG 24140 / F1)).